We begin with the raw amino-acid sequence, 207 residues long: Large ribosomal subunit protein uL4 (207 aa).

Residues 50–76 (AVKNRSAVSGGGRKPWKQKGTGRARQG) are disordered.

This sequence belongs to the universal ribosomal protein uL4 family. As to quaternary structure, part of the 50S ribosomal subunit.

Functionally, one of the primary rRNA binding proteins, this protein initially binds near the 5'-end of the 23S rRNA. It is important during the early stages of 50S assembly. It makes multiple contacts with different domains of the 23S rRNA in the assembled 50S subunit and ribosome. In terms of biological role, forms part of the polypeptide exit tunnel. The sequence is that of Large ribosomal subunit protein uL4 from Staphylococcus aureus (strain MRSA252).